Reading from the N-terminus, the 446-residue chain is DDB1- and CUL4-associated factor 12 (446 aa).

Basic residues predominate over residues 1–12 (MTRRAVSRKRRA). The tract at residues 1–33 (MTRRAVSRKRRAAPGTGPGEQSDWDHSAHKRKR) is disordered. 4 WD repeats span residues 132-173 (SHQS…PVCV), 177-215 (GHND…LSKS), 245-284 (PVNC…AKLL), and 333-370 (EQGS…FLED).

It belongs to the WD repeat DCAF12 family. As to quaternary structure, component of the DCX(DCAF12) E3 ubiquitin ligase complex, at least composed of cul4 (cul4a or cul4b), ddb1, dcaf12 and rbx1.

The protein resides in the cytoplasm. Its subcellular location is the cytoskeleton. It localises to the microtubule organizing center. The protein localises to the centrosome. It is found in the nucleus. The protein operates within protein modification; protein ubiquitination. Substrate-recognition component of a DCX (DDB1-CUL4-X-box) E3 ubiquitin-protein ligase complex of the DesCEND (destruction via C-end degrons) pathway, which recognizes a C-degron located at the extreme C terminus of target proteins, leading to their ubiquitination and degradation. The C-degron recognized by the DesCEND pathway is usually a motif of less than ten residues and can be present in full-length proteins, truncated proteins or proteolytically cleaved forms. The DCX(DCAF12) complex specifically recognizes proteins with a diglutamate (Glu-Glu) at the C-terminus leading to their ubiquitination and degradation. Also directly recognizes the C-terminal glutamate-leucine (Glu-Leu) degron as an alternative degron in proteins leading to their ubiquitination and degradation. The chain is DDB1- and CUL4-associated factor 12 from Xenopus tropicalis (Western clawed frog).